Here is a 146-residue protein sequence, read N- to C-terminus: Hemoglobin subunit beta (146 aa).

In terms of domain architecture, Globin spans 2-146 (QWTAEEKQLI…VAHALARKYH (145 aa)). Positions 63 and 92 each coordinate heme b.

This sequence belongs to the globin family. As to quaternary structure, heterotetramer of two alpha chains and two beta chains. In terms of tissue distribution, red blood cells.

Functionally, involved in oxygen transport from the lung to the various peripheral tissues. The polypeptide is Hemoglobin subunit beta (HBB) (Apus apus (Common swift)).